Reading from the N-terminus, the 265-residue chain is Hydroxyethylthiazole kinase (265 aa).

Residue Met55 coordinates substrate. Arg130 and Ser176 together coordinate ATP. Gly203 contacts substrate.

The protein belongs to the Thz kinase family. Mg(2+) is required as a cofactor.

The catalysed reaction is 5-(2-hydroxyethyl)-4-methylthiazole + ATP = 4-methyl-5-(2-phosphooxyethyl)-thiazole + ADP + H(+). Its pathway is cofactor biosynthesis; thiamine diphosphate biosynthesis; 4-methyl-5-(2-phosphoethyl)-thiazole from 5-(2-hydroxyethyl)-4-methylthiazole: step 1/1. Functionally, catalyzes the phosphorylation of the hydroxyl group of 4-methyl-5-beta-hydroxyethylthiazole (THZ). The sequence is that of Hydroxyethylthiazole kinase from Leptospira interrogans serogroup Icterohaemorrhagiae serovar Lai (strain 56601).